The chain runs to 471 residues: MSATEPTKEPAKEEVAEQSTVAQAQVDGSGEPANGSPLTETEYKVEVKLADMQADPNNPLYSAQSFEELQLSEELLKGVRNMNFRKPSKIQEKALPLLLMNPPTNMIAQSQSGTGKTAAFSLNILSRIDLSRNEPQAIALAPSRELARQILGVITHMGQFMEGLKTMAAIPDPTKRNQRLDAHVLVGTPGTVQEQLKRRLIKSDSIKILVLDEADNMLDQQGMGDQCTRVKSLLPKNIQTVLFSATFPPAVINYANKFAPNSNVLTLAHEELTIEGIKQLYIDIDKDQDKYSTLLKFYGLMTQASSIIFVRTRRTAEELERRMVAEGHKVAQLSGALEGQDRDRVIDQFRSGEAKVLITTNVLARGIDVESVTMVINYDVPTMADGREADPETYLHRIGRTGRFGRVGVALTFVHDKASWQQLHDIASYFKTDLHPIDTSDWDNVEEMIQKIIKSSRAGKSTKEMTEMITS.

Basic and acidic residues predominate over residues Met1–Val15. A disordered region spans residues Met1–Thr39. The Q motif motif lies at Gln64–Glu92. The Helicase ATP-binding domain maps to Leu97–Leu265. Ser110–Thr117 is a binding site for ATP. The DEAD box motif lies at Asp212 to Asp215. Residues Gly276 to Ile453 form the Helicase C-terminal domain.

It belongs to the DEAD box helicase family. DDX19/DBP5 subfamily. Associates with the nuclear pore complex.

It is found in the cytoplasm. The protein resides in the nucleus. Its subcellular location is the nuclear pore complex. It localises to the nucleus membrane. The enzyme catalyses ATP + H2O = ADP + phosphate + H(+). Functionally, ATP-dependent RNA helicase associated with the nuclear pore complex and essential for mRNA export from the nucleus. May participate in a terminal step of mRNA export through the removal of proteins that accompany mRNA through the nucleopore complex. May also be involved in early transcription. The polypeptide is ATP-dependent RNA helicase DBP5 (DBP5) (Phaeosphaeria nodorum (strain SN15 / ATCC MYA-4574 / FGSC 10173) (Glume blotch fungus)).